The chain runs to 225 residues: NAD(P)H-quinone oxidoreductase subunit K, chloroplastic (225 aa).

The [4Fe-4S] cluster site is built by cysteine 43, cysteine 44, cysteine 108, and cysteine 139.

The protein belongs to the complex I 20 kDa subunit family. As to quaternary structure, NDH is composed of at least 16 different subunits, 5 of which are encoded in the nucleus. [4Fe-4S] cluster is required as a cofactor.

Its subcellular location is the plastid. The protein resides in the chloroplast thylakoid membrane. It catalyses the reaction a plastoquinone + NADH + (n+1) H(+)(in) = a plastoquinol + NAD(+) + n H(+)(out). The enzyme catalyses a plastoquinone + NADPH + (n+1) H(+)(in) = a plastoquinol + NADP(+) + n H(+)(out). In terms of biological role, NDH shuttles electrons from NAD(P)H:plastoquinone, via FMN and iron-sulfur (Fe-S) centers, to quinones in the photosynthetic chain and possibly in a chloroplast respiratory chain. The immediate electron acceptor for the enzyme in this species is believed to be plastoquinone. Couples the redox reaction to proton translocation, and thus conserves the redox energy in a proton gradient. The protein is NAD(P)H-quinone oxidoreductase subunit K, chloroplastic of Arabis hirsuta (Hairy rock-cress).